We begin with the raw amino-acid sequence, 82 residues long: Small ribosomal subunit protein bS18 (82 aa).

Belongs to the bacterial ribosomal protein bS18 family. As to quaternary structure, part of the 30S ribosomal subunit. Forms a tight heterodimer with protein bS6.

Binds as a heterodimer with protein bS6 to the central domain of the 16S rRNA, where it helps stabilize the platform of the 30S subunit. The protein is Small ribosomal subunit protein bS18 of Sinorhizobium fredii (strain NBRC 101917 / NGR234).